We begin with the raw amino-acid sequence, 40 residues long: uncharacterized protein (40 aa).

Polar residues predominate over residues 1–14; that stretch reads MNRMLSLSVQSQRA. Residues 1-25 form a disordered region; that stretch reads MNRMLSLSVQSQRAPASPSPYGLKI.

This is an uncharacterized protein from Treponema pallidum (strain Nichols).